Consider the following 200-residue polypeptide: Recombination protein RecR (200 aa).

Residues 60 to 75 form a C4-type zinc finger; that stretch reads CVYCQALTEDDVCNIC. Residues 83–177 form the Toprim domain; the sequence is TKLCIIESML…KISRIGFGVP (95 aa).

The protein belongs to the RecR family.

Its function is as follows. May play a role in DNA repair. It seems to be involved in an RecBC-independent recombinational process of DNA repair. It may act with RecF and RecO. The chain is Recombination protein RecR from Francisella tularensis subsp. tularensis (strain SCHU S4 / Schu 4).